The primary structure comprises 592 residues: Methylenetetrahydrofolate reductase (NADH) 1 (592 aa).

The Proton donor/acceptor role is filled by Glu-21. NAD(+) contacts are provided by residues Glu-21 to Lys-26 and Thr-52 to Trp-53. Residues Thr-52 to Trp-53, His-81, Arg-111 to Asp-113, Tyr-153, His-157 to Val-160, Asp-175, and Lys-182 each bind FAD. Asp-113 is a binding site for substrate. Substrate is bound by residues Gln-193 and Tyr-285.

This sequence belongs to the methylenetetrahydrofolate reductase family. As to quaternary structure, homodimer. FAD is required as a cofactor.

The enzyme catalyses (6S)-5-methyl-5,6,7,8-tetrahydrofolate + NAD(+) = (6R)-5,10-methylene-5,6,7,8-tetrahydrofolate + NADH + H(+). The protein operates within one-carbon metabolism; tetrahydrofolate interconversion. Its activity is regulated as follows. Plant MTHFRs strongly prefer NADH over NADPH. Not inhibited by methionine or S-adenosylmethionine. In terms of biological role, the probable reversibility of the MTHFR reaction in plants suggests that they can metabolize the methyl group of 5,10-methylenetetrahydrofolate to serine, sugars and starch. This Arabidopsis thaliana (Mouse-ear cress) protein is Methylenetetrahydrofolate reductase (NADH) 1 (MTHFR1).